A 301-amino-acid polypeptide reads, in one-letter code: Probable alpha-L-glutamate ligase (301 aa).

One can recognise an ATP-grasp domain in the interval 104-287 (LQLLSRKGVG…VAGRIVSFIE (184 aa)). Residues Lys141, 178–179 (EF), Asp187, and 211–213 (RSN) contribute to the ATP site. Mg(2+) contacts are provided by Asp248, Glu260, and Asn262. Residues Asp248, Glu260, and Asn262 each contribute to the Mn(2+) site.

The protein belongs to the RimK family. Mg(2+) is required as a cofactor. Mn(2+) serves as cofactor.

The chain is Probable alpha-L-glutamate ligase from Thioalkalivibrio sulfidiphilus (strain HL-EbGR7).